The sequence spans 616 residues: MPKYRSITTTHGRNMTGARALWRATGMTTEDFDKMIIAVVNSFTQFVPGHIHLRNVGALVSEQINITGGVAKEFNTIAIDDGIAMGHSGMLYSLPSRDLIADSVEYMINAHCVDAMVCISNCDKITPGMLMAALRLNIPAIFVSGGPMESGAITLSNQNVKLNLIDAITCSVDPNISDVDQQRIESAACPTCGSCSGMFTANSMNCLTEALGLAQPGNGSLLATHSDRKKLFLNAGKYIVHLAKSYYEENNYSVLPRNIANKSSFENAMMLDIAMGGSTNTVLHLLAAAQEGEIDFTMADIDKLSRKVPHLCKVAPNTQRYHMEDFHRAGGVMGVLGELHRCGLLHEDTRNILNKSLLETLLNYDIFSCDNFESKNMYAAAPAGIRSTQAFIQKNRWTSLDTDRRSGCIRSREHAYSQDGGLAVLYGNLAVDGCLVKTAGVHINLQKFSGPAKVYESQEESVQAILTGNIHSGDVIVIRYEGPKGGPGMQEMLYPTSFLKSMGLDLCCALITDGRFSGGTSGLSIGHISPEAANKGLIGLVHDGDIINIDISMRSITLEVSEHILKIRHAAEIARGNKAWTPTNRNRNISISLKAYAHLVTSADKGAVRDKSKLLG.

A Mg(2+)-binding site is contributed by Asp-81. Cys-122 is a [2Fe-2S] cluster binding site. 2 residues coordinate Mg(2+): Asp-123 and Lys-124. N6-carboxylysine is present on Lys-124. [2Fe-2S] cluster is bound at residue Cys-195. Glu-491 is a binding site for Mg(2+). The active-site Proton acceptor is the Ser-517.

Belongs to the IlvD/Edd family. In terms of assembly, homodimer. [2Fe-2S] cluster serves as cofactor. It depends on Mg(2+) as a cofactor.

The enzyme catalyses (2R)-2,3-dihydroxy-3-methylbutanoate = 3-methyl-2-oxobutanoate + H2O. It carries out the reaction (2R,3R)-2,3-dihydroxy-3-methylpentanoate = (S)-3-methyl-2-oxopentanoate + H2O. It participates in amino-acid biosynthesis; L-isoleucine biosynthesis; L-isoleucine from 2-oxobutanoate: step 3/4. Its pathway is amino-acid biosynthesis; L-valine biosynthesis; L-valine from pyruvate: step 3/4. In terms of biological role, functions in the biosynthesis of branched-chain amino acids. Catalyzes the dehydration of (2R,3R)-2,3-dihydroxy-3-methylpentanoate (2,3-dihydroxy-3-methylvalerate) into 2-oxo-3-methylpentanoate (2-oxo-3-methylvalerate) and of (2R)-2,3-dihydroxy-3-methylbutanoate (2,3-dihydroxyisovalerate) into 2-oxo-3-methylbutanoate (2-oxoisovalerate), the penultimate precursor to L-isoleucine and L-valine, respectively. The protein is Dihydroxy-acid dehydratase of Blochmanniella pennsylvanica (strain BPEN).